The sequence spans 493 residues: Cholesteryl ester transfer protein (493 aa).

Positions 1-17 are cleaved as a signal peptide; that stretch reads MLAATVLTLALLGNAHA. An N-linked (GlcNAc...) (complex) asparagine glycan is attached at Asn105. A disulfide bridge connects residues Cys160 and Cys201. N-linked (GlcNAc...) asparagine glycosylation is found at Asn257, Asn358, and Asn413.

Belongs to the BPI/LBP/Plunc superfamily. BPI/LBP family. In terms of tissue distribution, expressed by the liver and secreted in plasma.

Its subcellular location is the secreted. It carries out the reaction cholesteryl (9Z-octadecenoate)(in) = cholesteryl (9Z-octadecenoate)(out). It catalyses the reaction 1,2,3-tri-(9Z-octadecenoyl)-glycerol(in) = 1,2,3-tri-(9Z-octadecenoyl)-glycerol(out). The enzyme catalyses cholesteryl (9Z,12Z)-octadecadienoate(in) = cholesteryl (9Z,12Z)-octadecadienoate(out). Its function is as follows. Involved in the transfer of neutral lipids, including cholesteryl ester and triglyceride, among lipoprotein particles. Allows the net movement of cholesteryl ester from high density lipoproteins/HDL to triglyceride-rich very low density lipoproteins/VLDL, and the equimolar transport of triglyceride from VLDL to HDL. Regulates the reverse cholesterol transport, by which excess cholesterol is removed from peripheral tissues and returned to the liver for elimination. This chain is Cholesteryl ester transfer protein, found in Homo sapiens (Human).